Reading from the N-terminus, the 71-residue chain is Disintegrin viridin (71 aa).

Positions 1–71 (AGEECDCGSP…SADCPRNRFH (71 aa)) constitute a Disintegrin domain. 6 disulfide bridges follow: Cys5/Cys20, Cys7/Cys15, Cys14/Cys37, Cys28/Cys34, Cys33/Cys58, and Cys46/Cys65. The short motif at 50–52 (RGD) is the Cell attachment site element. Residues 50–71 (RGDNPDDRCTGQSADCPRNRFH) form a disordered region.

It belongs to the venom metalloproteinase (M12B) family. P-II subfamily. P-IIa sub-subfamily. As to quaternary structure, monomer (disintegrin). As to expression, expressed by the venom gland.

The protein localises to the secreted. In terms of biological role, inhibits fibrinogen interaction with platelets. Acts by binding to alpha-IIb/beta-3 (ITGA2B/ITGB3) on the platelet surface and inhibits aggregation induced by ADP, thrombin, platelet-activating factor and collagen. The sequence is that of Disintegrin viridin from Crotalus viridis viridis (Prairie rattlesnake).